Here is a 187-residue protein sequence, read N- to C-terminus: Threonylcarbamoyl-AMP synthase (187 aa).

The region spanning 4-187 is the YrdC-like domain; it reads ILTLDNAVAT…DARSGQILRD (184 aa).

This sequence belongs to the SUA5 family. TsaC subfamily.

It is found in the cytoplasm. It carries out the reaction L-threonine + hydrogencarbonate + ATP = L-threonylcarbamoyladenylate + diphosphate + H2O. Functionally, required for the formation of a threonylcarbamoyl group on adenosine at position 37 (t(6)A37) in tRNAs that read codons beginning with adenine. Catalyzes the conversion of L-threonine, HCO(3)(-)/CO(2) and ATP to give threonylcarbamoyl-AMP (TC-AMP) as the acyladenylate intermediate, with the release of diphosphate. The protein is Threonylcarbamoyl-AMP synthase of Xanthomonas oryzae pv. oryzae (strain MAFF 311018).